A 517-amino-acid chain; its full sequence is Pentatricopeptide repeat-containing protein At1g13040, mitochondrial (517 aa).

The transit peptide at 1-57 (MHQTLGAVRLAYRSRIANLVKSGMIDNAVQVFDEMRHSSYRVFSFDYNRFIGVLVRE) directs the protein to the mitochondrion. 14 PPR repeats span residues 8–42 (VRLA…SYRV), 43–77 (FSFD…GFSL), 78–112 (IPFT…GFIP), 113–147 (DIWA…GREP), 148–182 (DVVS…GVSP), 183–218 (DNKA…RVKL), 219–253 (STVV…GCEP), 254–288 (DLVT…GIQL), 289–320 (DAYS…MEPR), 324–358 (DVVS…GMVM), 359–393 (NVVT…GLSP), 394–428 (DRIF…EITP), 429–463 (DAIS…ECCP), and 464–498 (DELT…GFTL).

The protein belongs to the PPR family. P subfamily.

It localises to the mitochondrion. The chain is Pentatricopeptide repeat-containing protein At1g13040, mitochondrial from Arabidopsis thaliana (Mouse-ear cress).